The chain runs to 202 residues: Ribosome maturation factor RimP (202 aa).

Belongs to the RimP family.

The protein resides in the cytoplasm. Required for maturation of 30S ribosomal subunits. The polypeptide is Ribosome maturation factor RimP (Polaromonas naphthalenivorans (strain CJ2)).